Consider the following 451-residue polypeptide: Heme sensor protein HssS (451 aa).

The next 2 helical transmembrane spans lie at I9–N29 and I164–S184. Residues Y186–Q238 enclose the HAMP domain. A Histidine kinase domain is found at N246–I451. H249 bears the Phosphohistidine; by autocatalysis mark.

In terms of processing, autophosphorylated.

Its subcellular location is the cell membrane. The enzyme catalyses ATP + protein L-histidine = ADP + protein N-phospho-L-histidine.. In terms of biological role, member of the two-component regulatory system HssS/HssR involved in intracellular heme homeostasis and tempering of staphylococcal virulence. HssS functions as a heme sensor histidine kinase which is autophosphorylated at a histidine residue and transfers its phosphate group to an aspartate residue of HssR. HssR/HssS activates the expression of HrtAB, an efflux pump, in response to extracellular heme, hemin, hemoglobin or blood. This is Heme sensor protein HssS (hssS) from Staphylococcus epidermidis (strain ATCC 12228 / FDA PCI 1200).